Here is a 204-residue protein sequence, read N- to C-terminus: uncharacterized protein (204 aa).

This is an uncharacterized protein from Caenorhabditis elegans.